We begin with the raw amino-acid sequence, 576 residues long: Alkaline phosphatase PhoD (576 aa).

Residues 1–32 form the signal peptide; that stretch reads MNSLLHHSFLKTVFSSLAIAIVTSSLSSVTIA. Residues Asp-68 and Thr-107 each contribute to the Zn(2+) site. The active-site Phosphothreonine intermediate is Thr-107. Cys-108 and Cys-144 form a disulfide bridge. Residues Asn-128 and 188–190 contribute to the substrate site; that span reads KDR. Cys-248 and Cys-332 are disulfide-bonded. The Zn(2+) site is built by Asp-318, His-322, Asp-363, His-364, and His-508. Cys-562 and Cys-573 are joined by a disulfide.

In terms of assembly, monomer. It depends on Zn(2+) as a cofactor.

It carries out the reaction a phosphate monoester + H2O = an alcohol + phosphate. Its function is as follows. Alkaline phosphatase with broad substrate specificity. Has phosphatase activity towards nucleotide and sugar phosphates with a preference to nucleotide phosphates. Has no phosphodiesterase activity. This is Alkaline phosphatase PhoD from Zymomonas mobilis subsp. mobilis (strain ATCC 31821 / ZM4 / CP4).